The primary structure comprises 864 residues: Leucine--tRNA ligase (864 aa).

Residues 42-52 (PYPSGKLHMGH) carry the 'HIGH' region motif. The short motif at 624–628 (KMSKS) is the 'KMSKS' region element. Residue K627 participates in ATP binding.

This sequence belongs to the class-I aminoacyl-tRNA synthetase family.

The protein localises to the cytoplasm. It carries out the reaction tRNA(Leu) + L-leucine + ATP = L-leucyl-tRNA(Leu) + AMP + diphosphate. This chain is Leucine--tRNA ligase, found in Burkholderia ambifaria (strain ATCC BAA-244 / DSM 16087 / CCUG 44356 / LMG 19182 / AMMD) (Burkholderia cepacia (strain AMMD)).